The chain runs to 466 residues: Soluble pyridine nucleotide transhydrogenase (466 aa).

Position 36–45 (glutamate 36–cysteine 45) interacts with FAD.

Belongs to the class-I pyridine nucleotide-disulfide oxidoreductase family. The cofactor is FAD.

The protein localises to the cytoplasm. It carries out the reaction NAD(+) + NADPH = NADH + NADP(+). In terms of biological role, conversion of NADPH, generated by peripheral catabolic pathways, to NADH, which can enter the respiratory chain for energy generation. This is Soluble pyridine nucleotide transhydrogenase from Vibrio atlanticus (strain LGP32) (Vibrio splendidus (strain Mel32)).